The chain runs to 121 residues: Large ribosomal subunit protein uL14c (121 aa).

The protein belongs to the universal ribosomal protein uL14 family. As to quaternary structure, part of the 50S ribosomal subunit.

It is found in the plastid. It localises to the chloroplast. Its function is as follows. Binds to 23S rRNA. This Phaeodactylum tricornutum (strain CCAP 1055/1) protein is Large ribosomal subunit protein uL14c.